Reading from the N-terminus, the 201-residue chain is Small ribosomal subunit protein uS4 (201 aa).

Residues 103 to 167 enclose the S4 RNA-binding domain; the sequence is RRLQTIVTKK…SKIPQVLEKT (65 aa). The segment at 163–201 is disordered; sequence VLEKTKSEAPAEETVEAPAEETVEAPAEEKKEESPSTES. Over residues 172-185 the composition is skewed to acidic residues; it reads PAEETVEAPAEETV. The span at 189–201 shows a compositional bias: basic and acidic residues; it reads AEEKKEESPSTES.

Belongs to the universal ribosomal protein uS4 family. In terms of assembly, part of the 30S ribosomal subunit. Contacts protein S5. The interaction surface between S4 and S5 is involved in control of translational fidelity.

Its function is as follows. One of the primary rRNA binding proteins, it binds directly to 16S rRNA where it nucleates assembly of the body of the 30S subunit. In terms of biological role, with S5 and S12 plays an important role in translational accuracy. The protein is Small ribosomal subunit protein uS4 of Nitrosopumilus maritimus (strain SCM1).